Reading from the N-terminus, the 162-residue chain is MSSTELSEKDLAYLREAIKVSQQARDEGQHPFGCIIVDENDNVIMSAGNRVPDGDVTQHAETRAVGLITKTRRDLEKCTLYTSTEPCAMCSGAIFWSGIRRMIFGLSNENLIKLTQKSGECPPLYINSRDILGAASHPIEVVGPYIEDEAIIPHKGFWDGGR.

Residues 8 to 132 (EKDLAYLREA…PLYINSRDIL (125 aa)) form the CMP/dCMP-type deaminase domain. Residue His59 participates in Zn(2+) binding. Glu61 acts as the Proton donor in catalysis. The Zn(2+) site is built by Cys87 and Cys90. Asp159 provides a ligand contact to substrate.

This sequence belongs to the cytidine and deoxycytidylate deaminase family. Homodimer. It depends on Zn(2+) as a cofactor.

The protein localises to the cytoplasm. Its subcellular location is the nucleus. It carries out the reaction cytosine + H2O + H(+) = uracil + NH4(+). It functions in the pathway pyrimidine metabolism; UMP biosynthesis via salvage pathway; uracil from cytosine: step 1/1. Functionally, catalyzes the hydrolytic deamination of cytosine to uracil or 5-methylcytosine to thymine. Is involved in the pyrimidine salvage pathway, which allows the cell to utilize cytosine for pyrimidine nucleotide synthesis. The protein is Probable cytosine deaminase of Schizosaccharomyces pombe (strain 972 / ATCC 24843) (Fission yeast).